Reading from the N-terminus, the 1696-residue chain is MDSSHYNPTYDPWNSPYSPHLHPPSAPLPPPPPLPPPPPPRQSHPESPNLYGRSTQSNGQRQDYLHQYSHHRQDLPPNTVVNQPTSNYYQHPPPLQQQHQPLSLQQQQQHPQYIPQQVSYEPQRISQPLTSSIQCTESQSDWVGFNEKRLDSWTVDSGPGRSRVDDGPSRNYQYDYSRNSSGVNRGLDGSSRSRDEFRSLGYARKESGVTRTEGNYQARGQLKSESDRYVRGLGDGNRVLSSSVGYGSDRYGLTVSRDVTRSSASREGARETRNEGRTLYPEKKDDYYHSEIEQYFDRGRREASNELNRTPRKQVQKKSALLRLETPRSYKNSRENEWSRQHNHHNGNGKRFNSNSYRGKEHLGHSDRGLVEKQRGRSPVDLDISFKSNVLVAKPVASPTSAGIRSGASVTPRSIKARRALLSDKNEKVSVTERNGKLGTHLSDEISVSEGFRRSTRQTTASKNEKEPDSHSTPSSSDSGGKLNKVRFVNGVVQDSKVKLTDSGPEASTHDTEKISSFCETLIEAKDDINVKHGINTEACSTEEGVIDGNQSTLKSHEDVLDRTSTDCNAGEALLPKVMEMDEILKTKTTINTSPGKLPVSWPTVADLSGCSEDMDCDEDMDCDEDMDCIPSRNIPMMEVNTGFEERKSINSSDGSLGYGGKDFQKPYLDASIYFNREDPGDKVLAKSDIGGIEDDNKRIDKNVDSLSPENDSSRGRPMGLDSPASLDIANVSLDLANSNNSASGDLANANSFTVGTYMNPMVTSPDKSVVFQMESKNLPHCKNTVNAPVENVSGKGYMETTPLNVAAETADNMDSEEGKQTCVNDTSSSLTKVGVKGSSNVLSVERTGGCSHSDESDLAMAVPSEGCMENVSTERLVPDEELILKSYHPAEIPCVDSGSDSRGLKTCLLEPNVSLSKDLTDCARESLVEQDVSQRSAIFCDKLPSLSAFVTETTLAIGINGMSGNETVTDTESGLHEIQPCTTVCKLSPEDRFGYGSSGAIGSVRSLSIDKNLEKDSSKVSSCLVSDNSVSPCHISPLVAVNEEIQNKISVKANYSNSQDGIKHKEDNCTESVEVETHEEKAKLPGGTSKYRTPVTNITAGSGGDSLFLCDSLSSSRRRIRSEVHVSAVVDETSKGEEKSKPSGGIVAVRRDSVFPCDSLSSSPRLSRPLRSEIHVASMVDETSKSIEKIESSGGTSEHRTPETDIVAGSRDSVFPCNSLSNSQRLSFRQLRSEIHVANMVDETNRVKESQNGDSLLDTLQEQIMTSHELTQPGSSAHCDLVMKPMGDPIAKLTDITSDVGSQEKDLRNIAKTDTFDGEAVSSDGQVSGTEIPGGSGVRVSRSYSHADVKFALTHVKEHVVSVPHRDPQSKTSMNSKYEIEKRKKKPNYSTQKSYPSSLPYVSDTKKDANPPIHITKRHTWHRKSDASPSSFVAAKPLSSTLSTQQKFPKVTAQSNNSYVRKGNSLLRKPSHGSPGAALGIPPSAIQLNHFTVEDKSTGSSNMVDVDNASSLVKTGEIATLERQSKPPSDSSTSKLSNAIATSSGKCALSYSTDHLTTGLPESIMDSATSGEANFPHSGGDTLKTSDTLIQTGYASDCQQKRNPSDLDSSNLKRMVYVKRKANQLVAASDIHDVSQNQIPSSDGYFKRSKNQLVRNSESRCNQSISLPDDALDTRSAANMVSERPSSSAFSDSGM.

Disordered stretches follow at residues 1–113 (MDSS…HPQY), 151–194 (DSWT…SRSR), 258–284 (DVTR…PEKK), and 299–376 (GRRE…KQRG). Over residues 21-42 (LHPPSAPLPPPPPLPPPPPPRQ) the composition is skewed to pro residues. Residues 52–61 (GRSTQSNGQR) are compositionally biased toward polar residues. The segment covering 96-113 (QQQHQPLSLQQQQQHPQY) has biased composition (low complexity). Polar residues predominate over residues 170-183 (RNYQYDYSRNSSGV). Basic and acidic residues-rich tracts occupy residues 267 to 284 (EGAR…PEKK), 325 to 340 (ETPR…EWSR), and 358 to 376 (RGKE…KQRG). Serine 378 is subject to Phosphoserine. Disordered stretches follow at residues 419–483 (RALL…GGKL), 688–724 (SDIG…LDSP), 1063–1090 (IKHK…GGTS), 1184–1211 (TSKS…VAGS), 1319–1340 (GEAV…SGVR), 1361–1429 (VVSV…SDAS), and 1658–1696 (SESR…DSGM). Composition is skewed to basic and acidic residues over residues 421–436 (LLSD…ERNG) and 695–704 (DDNKRIDKNV). At serine 708 the chain carries Phosphoserine. Residues 1184–1204 (TSKSIEKIESSGGTSEHRTPE) show a composition bias toward basic and acidic residues. The span at 1361 to 1370 (VVSVPHRDPQ) shows a compositional bias: basic and acidic residues. 3 stretches are compositionally biased toward polar residues: residues 1389 to 1398 (NYSTQKSYPS), 1658 to 1667 (SESRCNQSIS), and 1677 to 1696 (SAAN…DSGM).

This is an uncharacterized protein from Arabidopsis thaliana (Mouse-ear cress).